The sequence spans 125 residues: uncharacterized protein (125 aa).

Residues 5–33 (NLTVEQLAAELTKLQMENSHLKRKLRRSV) are a coiled coil. Disordered regions lie at residues 22–50 (NSHL…TEPE) and 96–125 (FRLH…GQQQ). Basic and acidic residues-rich tracts occupy residues 39 to 50 (EPPKPRELTEPE) and 96 to 112 (FRLH…EKKL). Residues 113 to 125 (SKEKRRTARGQQQ) show a composition bias toward basic residues.

This sequence belongs to the herpesviridae BLRF2 family.

This is an uncharacterized protein from Connochaetes taurinus (Blue wildebeest).